Reading from the N-terminus, the 559-residue chain is Myb/SANT-like DNA-binding domain-containing protein 2 (559 aa).

Positions 1 to 62 are disordered; sequence MAAPCGSELP…GSAAGSGAAA (62 aa). Phosphoserine occurs at positions 13, 24, 27, 32, and 48. The segment covering 46-61 has biased composition (low complexity); sequence GASPLGPGSAAGSGAA. The Myb-like domain occupies 103 to 173; sequence SWTPAETNAL…QCRERIKTLR (71 aa). Glycyl lysine isopeptide (Lys-Gly) (interchain with G-Cter in SUMO2) cross-links involve residues lysine 268 and lysine 343. At serine 436 the chain carries Phosphoserine.

The protein is Myb/SANT-like DNA-binding domain-containing protein 2 (Msantd2) of Mus musculus (Mouse).